Consider the following 300-residue polypeptide: UPF0761 membrane protein PSHAa0171 (300 aa).

Helical transmembrane passes span 47–67, 100–120, 143–163, 181–201, 215–235, and 249–269; these read LLSL…FPGF, NANQ…LLLI, FAVY…SIAV, FSGF…FIML, AIPG…GFAL, and AVAT…VVLL.

This sequence belongs to the UPF0761 family.

It is found in the cell inner membrane. This Pseudoalteromonas translucida (strain TAC 125) protein is UPF0761 membrane protein PSHAa0171.